The following is a 333-amino-acid chain: L-lactate dehydrogenase A chain (333 aa).

NAD(+) is bound by residues 30-58 and Arg100; that span reads GAVG…IEDK. Positions 107, 139, and 170 each coordinate substrate. Residue Asn139 participates in NAD(+) binding. His194 acts as the Proton acceptor in catalysis. Thr249 contributes to the substrate binding site.

Belongs to the LDH/MDH superfamily. LDH family. As to quaternary structure, homotetramer.

Its subcellular location is the cytoplasm. It carries out the reaction (S)-lactate + NAD(+) = pyruvate + NADH + H(+). Its pathway is fermentation; pyruvate fermentation to lactate; (S)-lactate from pyruvate: step 1/1. Its function is as follows. Interconverts simultaneously and stereospecifically pyruvate and lactate with concomitant interconversion of NADH and NAD(+). This Ambystoma mexicanum (Axolotl) protein is L-lactate dehydrogenase A chain (LDHA).